A 408-amino-acid chain; its full sequence is Putative transporter AmpG 2 (408 aa).

Transmembrane regions (helical) follow at residues 11-31, 49-69, 84-104, 110-130, 154-174, 177-197, 224-244, 261-281, 294-311, 353-373, and 382-402; these read IFNI…YLLT, IGLF…GPLL, YCLV…TSFN, IPFV…DMLI, FRIG…IISW, VYRT…FYPL, CIVI…LSIM, VGYK…GGFL, VLIY…LYFL, IALI…ISGY, and YFFI…LYLP.

It belongs to the major facilitator superfamily.

The protein resides in the cell inner membrane. The sequence is that of Putative transporter AmpG 2 (ampG2) from Rickettsia prowazekii (strain Madrid E).